The following is a 105-amino-acid chain: Small ribosomal subunit protein uS10 (105 aa).

Belongs to the universal ribosomal protein uS10 family. Part of the 30S ribosomal subunit.

Involved in the binding of tRNA to the ribosomes. This Aster yellows witches'-broom phytoplasma (strain AYWB) protein is Small ribosomal subunit protein uS10.